The chain runs to 229 residues: Protein FMP52-2, mitochondrial (229 aa).

Residues Met-1 to Lys-45 constitute a mitochondrion transit peptide.

Belongs to the FMP52 family.

The protein localises to the mitochondrion outer membrane. This is Protein FMP52-2, mitochondrial (FMP522) from Scheffersomyces stipitis (strain ATCC 58785 / CBS 6054 / NBRC 10063 / NRRL Y-11545) (Yeast).